Consider the following 234-residue polypeptide: Small ribosomal subunit protein uS3 (234 aa).

A KH type-2 domain is found at 39-107 (IRKFLKKELY…EVSINIKEVK (69 aa)).

The protein belongs to the universal ribosomal protein uS3 family. As to quaternary structure, part of the 30S ribosomal subunit. Forms a tight complex with proteins S10 and S14.

In terms of biological role, binds the lower part of the 30S subunit head. Binds mRNA in the 70S ribosome, positioning it for translation. The chain is Small ribosomal subunit protein uS3 from Helicobacter pylori (strain P12).